The chain runs to 152 residues: Lipoprotein signal peptidase (152 aa).

A run of 3 helical transmembrane segments spans residues 5–25, 61–81, and 84–104; these read LFVL…FWIV, WFFV…LATH, and LNIW…GNFI. Residues aspartate 114 and aspartate 130 contribute to the active site. Residues 125–145 traverse the membrane as a helical segment; the sequence is IFNVADSYLTVGVILLVICLW.

It belongs to the peptidase A8 family.

The protein localises to the cell membrane. The enzyme catalyses Release of signal peptides from bacterial membrane prolipoproteins. Hydrolyzes -Xaa-Yaa-Zaa-|-(S,diacylglyceryl)Cys-, in which Xaa is hydrophobic (preferably Leu), and Yaa (Ala or Ser) and Zaa (Gly or Ala) have small, neutral side chains.. It participates in protein modification; lipoprotein biosynthesis (signal peptide cleavage). This protein specifically catalyzes the removal of signal peptides from prolipoproteins. The chain is Lipoprotein signal peptidase from Streptococcus pyogenes serotype M3 (strain ATCC BAA-595 / MGAS315).